The sequence spans 200 residues: Cytochrome c biogenesis ATP-binding export protein CcmA (200 aa).

Positions 1-199 (MRLTGRGLRC…AARELRIGGA (199 aa)) constitute an ABC transporter domain. 35–42 (GANGAGKT) is an ATP binding site.

Belongs to the ABC transporter superfamily. CcmA exporter (TC 3.A.1.107) family. In terms of assembly, the complex is composed of two ATP-binding proteins (CcmA) and two transmembrane proteins (CcmB).

It is found in the cell inner membrane. The catalysed reaction is heme b(in) + ATP + H2O = heme b(out) + ADP + phosphate + H(+). Its function is as follows. Part of the ABC transporter complex CcmAB involved in the biogenesis of c-type cytochromes; once thought to export heme, this seems not to be the case, but its exact role is uncertain. Responsible for energy coupling to the transport system. The sequence is that of Cytochrome c biogenesis ATP-binding export protein CcmA from Rhodopseudomonas palustris (strain BisB18).